The following is a 577-amino-acid chain: Arginine--tRNA ligase (577 aa).

Positions 122–132 (PNVAKEMHVGH) match the 'HIGH' region motif.

The protein belongs to the class-I aminoacyl-tRNA synthetase family. Monomer.

The protein localises to the cytoplasm. It carries out the reaction tRNA(Arg) + L-arginine + ATP = L-arginyl-tRNA(Arg) + AMP + diphosphate. In Escherichia coli O9:H4 (strain HS), this protein is Arginine--tRNA ligase.